Consider the following 869-residue polypeptide: Retrovirus-related Pol polyprotein from type-1 retrotransposable element R2 (869 aa).

One can recognise a Reverse transcriptase domain in the interval 199–475; sequence IFVFYGRVPS…DLWKYLGVVY (277 aa). The segment at 601–869 is nucleic acid-binding endonuclease; the sequence is LYASISHSCK…FNNVTTVVHW (269 aa).

It catalyses the reaction DNA(n) + a 2'-deoxyribonucleoside 5'-triphosphate = DNA(n+1) + diphosphate. The protein is Retrovirus-related Pol polyprotein from type-1 retrotransposable element R2 of Bradysia coprophila (Dark-winged fungus gnat).